Consider the following 379-residue polypeptide: Endonuclease III homolog 1, chloroplastic (379 aa).

The transit peptide at 1 to 54 (MILLVNGGAATSIHPNAARFYRIGTMSRQIHGAVSSSKHISLKTQHPLSDSNSE) directs the protein to the chloroplast. In terms of domain architecture, HhH spans 244 to 272 (KYDGDIPSSLDDLLSLPGIGPKMAHLILH). Catalysis depends on Lys-265, which acts as the Nucleophile; for N-glycosylase activity. The [4Fe-4S] cluster site is built by Cys-340, Cys-347, Cys-350, and Cys-356.

Belongs to the Nth/MutY family. [4Fe-4S] cluster serves as cofactor. Expressed at low levels in roots, stems, leaves and flowers.

The protein resides in the plastid. It localises to the chloroplast stroma. It is found in the chloroplast nucleoid. It carries out the reaction 2'-deoxyribonucleotide-(2'-deoxyribose 5'-phosphate)-2'-deoxyribonucleotide-DNA = a 3'-end 2'-deoxyribonucleotide-(2,3-dehydro-2,3-deoxyribose 5'-phosphate)-DNA + a 5'-end 5'-phospho-2'-deoxyribonucleoside-DNA + H(+). Bifunctional DNA N-glycosylase with associated apurinic/apyrimidinic (AP) lyase function that catalyzes the first step in base excision repair (BER), the primary repair pathway for the repair of oxidative DNA damage. The DNA N-glycosylase activity releases the damaged DNA base from DNA by cleaving the N-glycosidic bond, leaving an AP site. The AP lyase activity cleaves the phosphodiester bond 3' to the AP site by a beta-elimination. Primarily recognizes and repairs oxidative base damage of pyrimidines. The sequence is that of Endonuclease III homolog 1, chloroplastic from Arabidopsis thaliana (Mouse-ear cress).